Consider the following 310-residue polypeptide: Putative S-adenosyl-L-methionine-dependent methyltransferase MMAR_0356 (310 aa).

S-adenosyl-L-methionine contacts are provided by residues Asp137 and 166 to 167 (DL).

This sequence belongs to the UPF0677 family.

Its function is as follows. Exhibits S-adenosyl-L-methionine-dependent methyltransferase activity. The polypeptide is Putative S-adenosyl-L-methionine-dependent methyltransferase MMAR_0356 (Mycobacterium marinum (strain ATCC BAA-535 / M)).